The chain runs to 355 residues: Peptide chain release factor 1 (355 aa).

Position 233 is an N5-methylglutamine (Q233).

Belongs to the prokaryotic/mitochondrial release factor family. In terms of processing, methylated by PrmC. Methylation increases the termination efficiency of RF1.

Its subcellular location is the cytoplasm. Functionally, peptide chain release factor 1 directs the termination of translation in response to the peptide chain termination codons UAG and UAA. This Bacillus cereus (strain ATCC 14579 / DSM 31 / CCUG 7414 / JCM 2152 / NBRC 15305 / NCIMB 9373 / NCTC 2599 / NRRL B-3711) protein is Peptide chain release factor 1.